A 142-amino-acid polypeptide reads, in one-letter code: Nucleoside diphosphate kinase (142 aa).

Lys-9, Phe-57, Arg-85, Thr-91, Arg-102, and Asn-112 together coordinate ATP. His-115 functions as the Pros-phosphohistidine intermediate in the catalytic mechanism.

The protein belongs to the NDK family. As to quaternary structure, homotetramer. Requires Mg(2+) as cofactor.

Its subcellular location is the cytoplasm. It catalyses the reaction a 2'-deoxyribonucleoside 5'-diphosphate + ATP = a 2'-deoxyribonucleoside 5'-triphosphate + ADP. The catalysed reaction is a ribonucleoside 5'-diphosphate + ATP = a ribonucleoside 5'-triphosphate + ADP. In terms of biological role, major role in the synthesis of nucleoside triphosphates other than ATP. The ATP gamma phosphate is transferred to the NDP beta phosphate via a ping-pong mechanism, using a phosphorylated active-site intermediate. The protein is Nucleoside diphosphate kinase of Dehalococcoides mccartyi (strain CBDB1).